A 160-amino-acid polypeptide reads, in one-letter code: 6,7-dimethyl-8-ribityllumazine synthase (160 aa).

5-amino-6-(D-ribitylamino)uracil-binding positions include Phe-32, 66-68 (ALE), and 90-92 (CII). A (2S)-2-hydroxy-3-oxobutyl phosphate-binding site is contributed by 95 to 96 (ET). His-98 functions as the Proton donor in the catalytic mechanism. Residue Asn-123 participates in 5-amino-6-(D-ribitylamino)uracil binding. Arg-137 contacts (2S)-2-hydroxy-3-oxobutyl phosphate.

The protein belongs to the DMRL synthase family.

It carries out the reaction (2S)-2-hydroxy-3-oxobutyl phosphate + 5-amino-6-(D-ribitylamino)uracil = 6,7-dimethyl-8-(1-D-ribityl)lumazine + phosphate + 2 H2O + H(+). The protein operates within cofactor biosynthesis; riboflavin biosynthesis; riboflavin from 2-hydroxy-3-oxobutyl phosphate and 5-amino-6-(D-ribitylamino)uracil: step 1/2. Catalyzes the formation of 6,7-dimethyl-8-ribityllumazine by condensation of 5-amino-6-(D-ribitylamino)uracil with 3,4-dihydroxy-2-butanone 4-phosphate. This is the penultimate step in the biosynthesis of riboflavin. This is 6,7-dimethyl-8-ribityllumazine synthase from Methylibium petroleiphilum (strain ATCC BAA-1232 / LMG 22953 / PM1).